Here is a 60-residue protein sequence, read N- to C-terminus: Cytotoxin 10 (60 aa).

Intrachain disulfides connect cysteine 3–cysteine 21, cysteine 14–cysteine 38, cysteine 42–cysteine 53, and cysteine 54–cysteine 59.

This sequence belongs to the three-finger toxin family. Short-chain subfamily. Type IA cytotoxin sub-subfamily. Monomer in solution; Homodimer and oligomer in the presence of negatively charged lipids forming a pore with a size ranging between 20 and 30 Angstroms. As to expression, expressed by the venom gland.

It localises to the secreted. It is found in the target cell membrane. Shows cytolytic activity on many different cells by forming pore in lipid membranes. In vivo, increases heart rate or kills the animal by cardiac arrest. In addition, it binds to heparin with high affinity, interacts with Kv channel-interacting protein 1 (KCNIP1) in a calcium-independent manner, and binds to integrin alpha-V/beta-3 (ITGAV/ITGB3) with moderate affinity. This chain is Cytotoxin 10, found in Naja annulifera (Banded Egyptian cobra).